The following is a 153-amino-acid chain: Arginine repressor (153 aa).

This sequence belongs to the ArgR family.

The protein resides in the cytoplasm. Its pathway is amino-acid biosynthesis; L-arginine biosynthesis [regulation]. In terms of biological role, regulates arginine biosynthesis genes. The sequence is that of Arginine repressor from Acetivibrio thermocellus (strain ATCC 27405 / DSM 1237 / JCM 9322 / NBRC 103400 / NCIMB 10682 / NRRL B-4536 / VPI 7372) (Clostridium thermocellum).